The chain runs to 359 residues: Serine/threonine-protein kinase SAPK7 (359 aa).

The Protein kinase domain occupies 4 to 260; it reads YELLKDIGAG…IREIRNHPWF (257 aa). Residues 10–18 and lysine 33 contribute to the ATP site; that span reads IGAGNFGVA. Aspartate 123 acts as the Proton acceptor in catalysis. Positions 299–359 are disordered; it reads EEARTPPRSS…VHASGEFQLS (61 aa). Residues 331 to 343 show a composition bias toward acidic residues; sequence EEQEEEEDAEDEY.

This sequence belongs to the protein kinase superfamily. Ser/Thr protein kinase family. In terms of processing, may be phosphorylated. Weakly expressed in roots. Expressed in roots of young seedlings.

Its subcellular location is the cytoplasm. The protein localises to the nucleus. It catalyses the reaction L-seryl-[protein] + ATP = O-phospho-L-seryl-[protein] + ADP + H(+). The enzyme catalyses L-threonyl-[protein] + ATP = O-phospho-L-threonyl-[protein] + ADP + H(+). Activated by hyperosmotic stress. In terms of biological role, may play a role in signal transduction of hyperosmotic response. In Oryza sativa subsp. japonica (Rice), this protein is Serine/threonine-protein kinase SAPK7 (SAPK7).